The chain runs to 179 residues: Small heat shock protein hspK (179 aa).

The sHSP domain occupies 32–178 (HRINIWRPTV…DRLKIPIQSK (147 aa)). The interval 80–122 (KKSKGGLNNLPSSSSSINSDSTTNTNTNTTTTTTTAPPPPSDA) is disordered. Residues 87 to 114 (NNLPSSSSSINSDSTTNTNTNTTTTTTT) show a composition bias toward low complexity.

It belongs to the small heat shock protein (HSP20) family.

This Dictyostelium discoideum (Social amoeba) protein is Small heat shock protein hspK (hspK).